The chain runs to 270 residues: Diaminopimelate epimerase (270 aa).

Residues Asn-15, Gln-49, and Asn-66 each coordinate substrate. The Proton donor role is filled by Cys-75. Substrate contacts are provided by residues 76-77 (GN), Asn-155, Asn-187, and 204-205 (ER). Cys-213 functions as the Proton acceptor in the catalytic mechanism. Residue 214-215 (GS) coordinates substrate.

It belongs to the diaminopimelate epimerase family. Homodimer.

It is found in the cytoplasm. It catalyses the reaction (2S,6S)-2,6-diaminopimelate = meso-2,6-diaminopimelate. It participates in amino-acid biosynthesis; L-lysine biosynthesis via DAP pathway; DL-2,6-diaminopimelate from LL-2,6-diaminopimelate: step 1/1. Catalyzes the stereoinversion of LL-2,6-diaminopimelate (L,L-DAP) to meso-diaminopimelate (meso-DAP), a precursor of L-lysine and an essential component of the bacterial peptidoglycan. In Rickettsia typhi (strain ATCC VR-144 / Wilmington), this protein is Diaminopimelate epimerase.